Here is a 402-residue protein sequence, read N- to C-terminus: Odorant receptor 22c (402 aa).

Over 1-42 (MTDSGQPAIADHFYRIPRISGLIVGLWPQRIRGGGGRPWHAH) the chain is Cytoplasmic. The chain crosses the membrane as a helical span at residues 43-63 (LLFVFAFAMVVVGAVGEVSYG). Over 64–73 (CVHLDNLVVA) the chain is Extracellular. The helical transmembrane segment at 74 to 94 (LEAFCPGTTKAVCVLKLWVFF) threads the bilayer. Over 95–134 (RSNRRWAELVQRLRAILWESRRQEAQRMLVGLATTANRLS) the chain is Cytoplasmic. Residues 135 to 155 (LLLLSSGTATNAAFTLQPLIM) traverse the membrane as a helical segment. The Extracellular segment spans residues 156 to 173 (GLYRWIVQLPGQTELPFN). A helical transmembrane segment spans residues 174 to 194 (IILPSFAVQPGVFPLTYVLLT). Over 195–201 (ASGACTV) the chain is Cytoplasmic. Residues 202–222 (FAFSFVDGFFICSCLYICGAF) traverse the membrane as a helical segment. Over 223–276 (RLVQQDIRRIFADLHGDSVDVFTEEMNAEVRHRLAQVVERHNAIIDFCTDLTRQ) the chain is Extracellular. A helical membrane pass occupies residues 277 to 297 (FTVIVLMHFLSAAFVLCSTIL). The Cytoplasmic segment spans residues 298 to 307 (DIMLNTSSLS). The helical transmembrane segment at 308-328 (GLTYICYIIAALTQLFLYCFG) threads the bilayer. At 329 to 402 (GNHVSESSAA…SYITLLKTFL (74 aa)) the chain is on the extracellular side.

Belongs to the insect chemoreceptor superfamily. Heteromeric odorant receptor channel (TC 1.A.69) family. Or1a subfamily. As to quaternary structure, interacts with Orco. Complexes exist early in the endomembrane system in olfactory sensory neurons (OSNs), coupling these complexes to the conserved ciliary trafficking pathway. As to expression, not expressed in either the antenna or maxillary palp.

It localises to the cell membrane. Its function is as follows. Odorant receptor which mediates acceptance or avoidance behavior, depending on its substrates. The odorant receptor repertoire encodes a large collection of odor stimuli that vary widely in identity, intensity, and duration. May form a complex with Orco to form odorant-sensing units, providing sensitive and prolonged odorant signaling and calcium permeability. This Drosophila melanogaster (Fruit fly) protein is Odorant receptor 22c (Or22c).